An 89-amino-acid polypeptide reads, in one-letter code: Small ribosomal subunit protein uS15 (89 aa).

Belongs to the universal ribosomal protein uS15 family. As to quaternary structure, part of the 30S ribosomal subunit. Forms a bridge to the 50S subunit in the 70S ribosome, contacting the 23S rRNA.

In terms of biological role, one of the primary rRNA binding proteins, it binds directly to 16S rRNA where it helps nucleate assembly of the platform of the 30S subunit by binding and bridging several RNA helices of the 16S rRNA. Forms an intersubunit bridge (bridge B4) with the 23S rRNA of the 50S subunit in the ribosome. The chain is Small ribosomal subunit protein uS15 from Chlorobium phaeobacteroides (strain DSM 266 / SMG 266 / 2430).